Consider the following 423-residue polypeptide: NDP-N-acetyl-D-galactosaminuronic acid dehydrogenase (423 aa).

11 to 28 lines the NAD(+) pocket; that stretch reads TISVVGLGYIGLPTATVL. Lys-218 acts as the Proton donor/acceptor in catalysis. The active-site Nucleophile is Cys-272.

Belongs to the UDP-glucose/GDP-mannose dehydrogenase family.

Its function is as follows. Probably involved in the synthesis of sugar components of EPS I, by converting NDP-N-acetyl-D-galactosamine into NDP-N-acetyl-D-galactosaminuronic acid. This is NDP-N-acetyl-D-galactosaminuronic acid dehydrogenase (epsD) from Ralstonia nicotianae (strain ATCC BAA-1114 / GMI1000) (Ralstonia solanacearum).